A 303-amino-acid chain; its full sequence is tRNA dimethylallyltransferase (303 aa).

16–23 is a binding site for ATP; it reads GPTASGKS. Substrate is bound at residue 18 to 23; it reads TASGKS. Residues 41 to 44 are interaction with substrate tRNA; sequence DSMQ. Residues 141-161 form a disordered region; sequence AEALHGELSARDPETAGRVRP. The interval 165 to 169 is interaction with substrate tRNA; the sequence is QRIVR.

It belongs to the IPP transferase family. As to quaternary structure, monomer. Mg(2+) is required as a cofactor.

The catalysed reaction is adenosine(37) in tRNA + dimethylallyl diphosphate = N(6)-dimethylallyladenosine(37) in tRNA + diphosphate. In terms of biological role, catalyzes the transfer of a dimethylallyl group onto the adenine at position 37 in tRNAs that read codons beginning with uridine, leading to the formation of N6-(dimethylallyl)adenosine (i(6)A). The sequence is that of tRNA dimethylallyltransferase from Rhizobium meliloti (strain 1021) (Ensifer meliloti).